A 584-amino-acid polypeptide reads, in one-letter code: Tricyclene synthase 1e20, chloroplastic (584 aa).

The transit peptide at methionine 1 to asparagine 45 directs the protein to the chloroplast. Asparagine 30, asparagine 209, and asparagine 322 each carry an N-linked (GlcNAc...) asparagine glycan. 2 residues coordinate Mg(2+): aspartate 341 and aspartate 345. The DDXXD motif motif lies at aspartate 341 to aspartate 345. Residues asparagine 387 and asparagine 468 are each glycosylated (N-linked (GlcNAc...) asparagine). Mg(2+) contacts are provided by asparagine 485, serine 489, and glutamate 493. N-linked (GlcNAc...) asparagine glycosylation is present at asparagine 512.

Belongs to the terpene synthase family. Tpsg subfamily. Requires Mg(2+) as cofactor. Mn(2+) is required as a cofactor. In terms of tissue distribution, accumulates at low levels in flowers; mostly expressed in both upper and lower petal lobes, and, to a lower extent, in tube and stamens.

It is found in the plastid. The protein resides in the chloroplast stroma. It catalyses the reaction (2E)-geranyl diphosphate = tricyclene + diphosphate. The enzyme catalyses (2E)-geranyl diphosphate = beta-myrcene + diphosphate. Its pathway is secondary metabolite biosynthesis; terpenoid biosynthesis. Its function is as follows. May contribute to floral scent emission. In Antirrhinum majus (Garden snapdragon), this protein is Tricyclene synthase 1e20, chloroplastic (1e20).